Here is a 498-residue protein sequence, read N- to C-terminus: ATP synthase subunit beta, chloroplastic (498 aa).

172–179 contacts ATP; sequence GGAGVGKT.

It belongs to the ATPase alpha/beta chains family. In terms of assembly, F-type ATPases have 2 components, CF(1) - the catalytic core - and CF(0) - the membrane proton channel. CF(1) has five subunits: alpha(3), beta(3), gamma(1), delta(1), epsilon(1). CF(0) has four main subunits: a(1), b(1), b'(1) and c(9-12).

Its subcellular location is the plastid. The protein localises to the chloroplast thylakoid membrane. The catalysed reaction is ATP + H2O + 4 H(+)(in) = ADP + phosphate + 5 H(+)(out). In terms of biological role, produces ATP from ADP in the presence of a proton gradient across the membrane. The catalytic sites are hosted primarily by the beta subunits. The protein is ATP synthase subunit beta, chloroplastic of Saruma henryi (Upright wild ginger).